The primary structure comprises 338 residues: Nucleoid-associated protein PA14_59050 (338 aa).

It belongs to the YejK family.

The protein localises to the cytoplasm. The protein resides in the nucleoid. The sequence is that of Nucleoid-associated protein PA14_59050 from Pseudomonas aeruginosa (strain UCBPP-PA14).